The sequence spans 109 residues: Nucleoid-associated protein Caul_4574 (109 aa).

The protein belongs to the YbaB/EbfC family. In terms of assembly, homodimer.

It is found in the cytoplasm. Its subcellular location is the nucleoid. Its function is as follows. Binds to DNA and alters its conformation. May be involved in regulation of gene expression, nucleoid organization and DNA protection. This chain is Nucleoid-associated protein Caul_4574, found in Caulobacter sp. (strain K31).